The sequence spans 321 residues: ATP-dependent 6-phosphofructokinase (321 aa).

ATP is bound at residue Gly-12. Residues 22 to 26 (RGVVR) and 55 to 60 (RYSVSD) contribute to the ADP site. Residues 73-74 (RF) and 103-106 (GDGS) each bind ATP. Asp-104 provides a ligand contact to Mg(2+). 127–129 (TID) is a substrate binding site. The Proton acceptor role is filled by Asp-129. Arg-156 is a binding site for ADP. Residues Arg-164 and 171-173 (MGR) contribute to the substrate site. Residues 187–189 (GCE), Lys-213, and 215–217 (KRH) each bind ADP. Substrate-binding positions include Glu-224, Arg-245, and 251 to 254 (HIQR).

The protein belongs to the phosphofructokinase type A (PFKA) family. ATP-dependent PFK group I subfamily. Prokaryotic clade 'B1' sub-subfamily. As to quaternary structure, homotetramer. The cofactor is Mg(2+).

It is found in the cytoplasm. It carries out the reaction beta-D-fructose 6-phosphate + ATP = beta-D-fructose 1,6-bisphosphate + ADP + H(+). It functions in the pathway carbohydrate degradation; glycolysis; D-glyceraldehyde 3-phosphate and glycerone phosphate from D-glucose: step 3/4. With respect to regulation, allosterically activated by ADP and other diphosphonucleosides, and allosterically inhibited by phosphoenolpyruvate. Catalyzes the phosphorylation of D-fructose 6-phosphate to fructose 1,6-bisphosphate by ATP, the first committing step of glycolysis. The polypeptide is ATP-dependent 6-phosphofructokinase (Histophilus somni (strain 129Pt) (Haemophilus somnus)).